A 409-amino-acid polypeptide reads, in one-letter code: tRNA(Met) cytidine acetate ligase (409 aa).

Residues 7–20 (VVEY…HLYH), glycine 102, asparagine 169, and arginine 194 each bind ATP.

The protein belongs to the TmcAL family.

It localises to the cytoplasm. It catalyses the reaction cytidine(34) in elongator tRNA(Met) + acetate + ATP = N(4)-acetylcytidine(34) in elongator tRNA(Met) + AMP + diphosphate. Functionally, catalyzes the formation of N(4)-acetylcytidine (ac(4)C) at the wobble position of elongator tRNA(Met), using acetate and ATP as substrates. First activates an acetate ion to form acetyladenylate (Ac-AMP) and then transfers the acetyl group to tRNA to form ac(4)C34. The chain is tRNA(Met) cytidine acetate ligase from Clostridium botulinum (strain Langeland / NCTC 10281 / Type F).